The sequence spans 368 residues: Protein Wnt-1 (368 aa).

A signal peptide spans 1-25; the sequence is MRGPALLLALRALCALSALRGTARA. 11 cysteine pairs are disulfide-bonded: C91–C102, C141–C149, C151–C168, C216–C230, C218–C225, C297–C328, C313–C323, C327–C367, C343–C358, C345–C355, and C350–C351. S222 is lipidated: O-palmitoleoyl serine; by PORCN.

It belongs to the Wnt family. In terms of assembly, forms a soluble 1:1 complex with AFM; this prevents oligomerization and is required for prolonged biological activity. The complex with AFM may represent the physiological form in body fluids. Interacts with PORCN. In terms of processing, N-glycosylated. N-glycosylation favors subsequent palmitoleoylation. Palmitoleoylation is required for efficient binding to frizzled receptors. Palmitoleoylation is necessary for proper trafficking to cell surface. Depalmitoleoylated by NOTUM, leading to inhibit Wnt signaling pathway.

The protein localises to the secreted. Its subcellular location is the extracellular space. It localises to the extracellular matrix. In terms of biological role, ligand for members of the frizzled family of seven transmembrane receptors. Acts in the canonical Wnt signaling pathway by promoting beta-catenin-dependent transcriptional activation. Developmental protein that promotes cell proliferation in the developing spinal cord. Has a role in osteoblast function, bone development and bone homeostasis. The polypeptide is Protein Wnt-1 (WNT1) (Gallus gallus (Chicken)).